Consider the following 171-residue polypeptide: 6,7-dimethyl-8-ribityllumazine synthase (171 aa).

5-amino-6-(D-ribitylamino)uracil contacts are provided by residues F30, 64 to 66, and 88 to 90; these read ALE and AVI. 93 to 94 serves as a coordination point for (2S)-2-hydroxy-3-oxobutyl phosphate; that stretch reads ET. H96 serves as the catalytic Proton donor. N121 serves as a coordination point for 5-amino-6-(D-ribitylamino)uracil. R135 is a binding site for (2S)-2-hydroxy-3-oxobutyl phosphate.

The protein belongs to the DMRL synthase family.

It catalyses the reaction (2S)-2-hydroxy-3-oxobutyl phosphate + 5-amino-6-(D-ribitylamino)uracil = 6,7-dimethyl-8-(1-D-ribityl)lumazine + phosphate + 2 H2O + H(+). It participates in cofactor biosynthesis; riboflavin biosynthesis; riboflavin from 2-hydroxy-3-oxobutyl phosphate and 5-amino-6-(D-ribitylamino)uracil: step 1/2. Functionally, catalyzes the formation of 6,7-dimethyl-8-ribityllumazine by condensation of 5-amino-6-(D-ribitylamino)uracil with 3,4-dihydroxy-2-butanone 4-phosphate. This is the penultimate step in the biosynthesis of riboflavin. This chain is 6,7-dimethyl-8-ribityllumazine synthase, found in Polynucleobacter necessarius subsp. necessarius (strain STIR1).